The following is a 213-amino-acid chain: Uridine kinase (213 aa).

ATP is bound at residue 15–22; it reads GASASGKS.

It belongs to the uridine kinase family.

The protein localises to the cytoplasm. It catalyses the reaction uridine + ATP = UMP + ADP + H(+). It carries out the reaction cytidine + ATP = CMP + ADP + H(+). The protein operates within pyrimidine metabolism; CTP biosynthesis via salvage pathway; CTP from cytidine: step 1/3. It functions in the pathway pyrimidine metabolism; UMP biosynthesis via salvage pathway; UMP from uridine: step 1/1. This chain is Uridine kinase, found in Escherichia coli O157:H7.